The chain runs to 388 residues: NADH-quinone oxidoreductase subunit D 2 (388 aa).

It belongs to the complex I 49 kDa subunit family. NDH-1 is composed of 14 different subunits. Subunits NuoB, C, D, E, F, and G constitute the peripheral sector of the complex.

It is found in the cell inner membrane. The enzyme catalyses a quinone + NADH + 5 H(+)(in) = a quinol + NAD(+) + 4 H(+)(out). NDH-1 shuttles electrons from NADH, via FMN and iron-sulfur (Fe-S) centers, to quinones in the respiratory chain. The immediate electron acceptor for the enzyme in this species is believed to be ubiquinone. Couples the redox reaction to proton translocation (for every two electrons transferred, four hydrogen ions are translocated across the cytoplasmic membrane), and thus conserves the redox energy in a proton gradient. This chain is NADH-quinone oxidoreductase subunit D 2, found in Sorangium cellulosum (strain So ce56) (Polyangium cellulosum (strain So ce56)).